A 264-amino-acid chain; its full sequence is Proteasome subunit beta type-4 (264 aa).

Met-1 carries the post-translational modification N-acetylmethionine. The propeptide occupies 1–45; it reads MEAFLGSRSGLWAGGPAPGQFYRIPSTPDSFMDPASALYRGPITR. Ser-26 is modified (phosphoserine). Residue Tyr-102 is modified to Phosphotyrosine.

It belongs to the peptidase T1B family. The 26S proteasome consists of a 20S proteasome core and two 19S regulatory subunits. The 20S proteasome core is a barrel-shaped complex made of 28 subunits that are arranged in four stacked rings. The two outer rings are each formed by seven alpha subunits, and the two inner rings are formed by seven beta subunits. The proteolytic activity is exerted by three beta-subunits PSMB5, PSMB6 and PSMB7. Forms a ternary complex with SMAD1 and OAZ1 before PSMB4 is incorporated into the 20S proteasome. Interacts with PRPF19. As to quaternary structure, (Microbial infection) Interacts with HTLV-1 Tax protein. In terms of assembly, (Microbial infection) Interacts with HIV-1 Nef and Tat proteins.

The protein localises to the cytoplasm. It is found in the nucleus. Its function is as follows. Non-catalytic component of the 20S core proteasome complex involved in the proteolytic degradation of most intracellular proteins. This complex plays numerous essential roles within the cell by associating with different regulatory particles. Associated with two 19S regulatory particles, forms the 26S proteasome and thus participates in the ATP-dependent degradation of ubiquitinated proteins. The 26S proteasome plays a key role in the maintenance of protein homeostasis by removing misfolded or damaged proteins that could impair cellular functions, and by removing proteins whose functions are no longer required. Associated with the PA200 or PA28, the 20S proteasome mediates ubiquitin-independent protein degradation. This type of proteolysis is required in several pathways including spermatogenesis (20S-PA200 complex) or generation of a subset of MHC class I-presented antigenic peptides (20S-PA28 complex). SMAD1/OAZ1/PSMB4 complex mediates the degradation of the CREBBP/EP300 repressor SNIP1. The sequence is that of Proteasome subunit beta type-4 from Homo sapiens (Human).